A 206-amino-acid chain; its full sequence is 2-phospho-L-lactate guanylyltransferase (206 aa).

This sequence belongs to the CofC family. As to quaternary structure, homodimer.

The enzyme catalyses (2S)-2-phospholactate + GTP + H(+) = (2S)-lactyl-2-diphospho-5'-guanosine + diphosphate. Its pathway is cofactor biosynthesis; coenzyme F420 biosynthesis. Its function is as follows. Guanylyltransferase that catalyzes the activation of (2S)-2-phospholactate (2-PL) as (2S)-lactyl-2-diphospho-5'-guanosine, via the condensation of 2-PL with GTP. It is involved in the biosynthesis of coenzyme F420, a hydride carrier cofactor. This Archaeoglobus fulgidus (strain ATCC 49558 / DSM 4304 / JCM 9628 / NBRC 100126 / VC-16) protein is 2-phospho-L-lactate guanylyltransferase.